Here is a 48-residue protein sequence, read N- to C-terminus: Large ribosomal subunit protein bL33A (48 aa).

This sequence belongs to the bacterial ribosomal protein bL33 family.

This is Large ribosomal subunit protein bL33A from Exiguobacterium sibiricum (strain DSM 17290 / CCUG 55495 / CIP 109462 / JCM 13490 / 255-15).